The following is a 227-amino-acid chain: Isopentenyl-diphosphate Delta-isomerase 1 (227 aa).

Lys36 lines the substrate pocket. Residues His40 and His51 each contribute to the Mg(2+) site. The Nudix hydrolase domain occupies 49 to 199 (LLHRAFSVFL…EIKITPWFQI (151 aa)). Residues Arg70 and Lys74 each coordinate substrate. Cys86 (proton acceptor) is an active-site residue. Residue Ser87 participates in substrate binding. Residues Glu146 and Glu148 each coordinate Mg(2+). The active site involves Glu148. Lys176 bears the N6-acetyllysine mark.

It belongs to the IPP isomerase type 1 family. As to quaternary structure, monomer. Mg(2+) serves as cofactor.

Its subcellular location is the peroxisome. The enzyme catalyses isopentenyl diphosphate = dimethylallyl diphosphate. The protein operates within isoprenoid biosynthesis; dimethylallyl diphosphate biosynthesis; dimethylallyl diphosphate from isopentenyl diphosphate: step 1/1. In terms of biological role, catalyzes the 1,3-allylic rearrangement of the homoallylic substrate isopentenyl (IPP) to its highly electrophilic allylic isomer, dimethylallyl diphosphate (DMAPP). The sequence is that of Isopentenyl-diphosphate Delta-isomerase 1 (IDI1) from Bos taurus (Bovine).